Reading from the N-terminus, the 608-residue chain is Albumin 2 (608 aa).

Positions methionine 1–serine 14 are cleaved as a signal peptide. Residues valine 15–arginine 18 constitute a propeptide that is removed on maturation. Albumin domains are found at residues serine 19–histidine 205, alanine 206–aspartate 398, and lysine 402–serine 600. 18 disulfides stabilise this stretch: cysteine 26/cysteine 72, cysteine 71/cysteine 80, cysteine 93/cysteine 108, cysteine 107/cysteine 118, cysteine 142/cysteine 187, cysteine 186/cysteine 195, cysteine 218/cysteine 264, cysteine 263/cysteine 271, cysteine 283/cysteine 299, cysteine 298/cysteine 309, cysteine 336/cysteine 381, cysteine 380/cysteine 389, cysteine 414/cysteine 460, cysteine 459/cysteine 471, cysteine 484/cysteine 500, cysteine 499/cysteine 510, cysteine 537/cysteine 582, and cysteine 581/cysteine 590. The N-linked (GlcNAc...) asparagine glycan is linked to asparagine 501.

Belongs to the ALB/AFP/VDB family. In terms of tissue distribution, plasma.

The protein resides in the secreted. Its function is as follows. Binds water, Ca(2+), Na(+), K(+), fatty acids, hormones, bilirubin and drugs. Its main function is the regulation of the colloidal osmotic pressure of blood. The polypeptide is Albumin 2 (alb2) (Salmo salar (Atlantic salmon)).